The sequence spans 343 residues: Protein RecA (343 aa).

65-72 (GPESSGKT) contacts ATP.

The protein belongs to the RecA family.

It is found in the cytoplasm. Its function is as follows. Can catalyze the hydrolysis of ATP in the presence of single-stranded DNA, the ATP-dependent uptake of single-stranded DNA by duplex DNA, and the ATP-dependent hybridization of homologous single-stranded DNAs. It interacts with LexA causing its activation and leading to its autocatalytic cleavage. The chain is Protein RecA from Xanthomonas campestris pv. campestris (strain 8004).